The following is a 246-amino-acid chain: Transcription factor MYB13 (246 aa).

HTH myb-type domains follow at residues 9-61 (KIGL…INYL) and 62-116 (RPDI…KKRL). DNA-binding regions (H-T-H motif) lie at residues 37–61 (WRAL…INYL) and 89–112 (WSAI…HTHL).

Expressed in roots and flowers. Expressed in shoot apex, axillary buds, at the basis of flowers and branching points of inflorescences.

It is found in the nucleus. Its function is as follows. Plays a regulatory role in meristem function. Functions as component of a regulatory network controlling the establishment and/or development of the shoot system by the regulation of apical meristem function. May play a role in tolerance to boric acid. The sequence is that of Transcription factor MYB13 from Arabidopsis thaliana (Mouse-ear cress).